The sequence spans 266 residues: Putative pyruvate, phosphate dikinase regulatory protein (266 aa).

ADP is bound at residue 147 to 154 (GLSRTSKT).

This sequence belongs to the pyruvate, phosphate/water dikinase regulatory protein family. PDRP subfamily.

It carries out the reaction N(tele)-phospho-L-histidyl/L-threonyl-[pyruvate, phosphate dikinase] + ADP = N(tele)-phospho-L-histidyl/O-phospho-L-threonyl-[pyruvate, phosphate dikinase] + AMP + H(+). The enzyme catalyses N(tele)-phospho-L-histidyl/O-phospho-L-threonyl-[pyruvate, phosphate dikinase] + phosphate + H(+) = N(tele)-phospho-L-histidyl/L-threonyl-[pyruvate, phosphate dikinase] + diphosphate. In terms of biological role, bifunctional serine/threonine kinase and phosphorylase involved in the regulation of the pyruvate, phosphate dikinase (PPDK) by catalyzing its phosphorylation/dephosphorylation. This chain is Putative pyruvate, phosphate dikinase regulatory protein, found in Clostridium perfringens (strain SM101 / Type A).